The sequence spans 250 residues: Virulence plasmid protein pGP6-D-related protein (250 aa).

Belongs to the UPF0137 (pGP6-D) family.

This is Virulence plasmid protein pGP6-D-related protein from Chlamydia pneumoniae (Chlamydophila pneumoniae).